Here is a 437-residue protein sequence, read N- to C-terminus: 2-methylisoborneol synthase (437 aa).

The interval alanine 32–proline 125 is disordered. Over residues proline 59–glutamate 73 the composition is skewed to pro residues. 6 residues coordinate Mg(2+): aspartate 194, aspartate 195, glutamate 199, asparagine 342, serine 346, and glutamate 350.

The protein belongs to the terpene synthase family. 2-methylisoborneol synthase subfamily. Mg(2+) is required as a cofactor.

The catalysed reaction is (E)-2-methylgeranyl diphosphate + H2O = 2-methylisoborneol + diphosphate. In terms of biological role, catalyzes the cyclization of 2-methylgeranyl diphosphate (2-MeGPP) to 2-methylisoborneol (2-MIB), which likely involves the intermediacy of 2-methyllinalyl diphosphate. In Streptomyces griseus, this protein is 2-methylisoborneol synthase.